Reading from the N-terminus, the 194-residue chain is Adenylate kinase (194 aa).

10–15 contacts ATP; sequence GAGKGT. The segment at 30–59 is NMP; that stretch reads STGDMLRAAVAQQSEIGKRAKAVMDAGQLV. AMP-binding positions include Thr-31, Arg-36, 57–59, 85–88, and Gln-92; these read QLV and GYPR. The segment at 126–142 is LID; the sequence is SRVAETIAKGGQVRSDD. Residue Arg-127 coordinates ATP. 2 residues coordinate AMP: Arg-139 and Arg-150. Ala-178 contacts ATP.

This sequence belongs to the adenylate kinase family. In terms of assembly, monomer.

The protein resides in the cytoplasm. The enzyme catalyses AMP + ATP = 2 ADP. The protein operates within purine metabolism; AMP biosynthesis via salvage pathway; AMP from ADP: step 1/1. Functionally, catalyzes the reversible transfer of the terminal phosphate group between ATP and AMP. Plays an important role in cellular energy homeostasis and in adenine nucleotide metabolism. The sequence is that of Adenylate kinase from Brucella canis (strain ATCC 23365 / NCTC 10854 / RM-666).